A 296-amino-acid polypeptide reads, in one-letter code: Diaminopimelate epimerase (296 aa).

Substrate contacts are provided by asparagine 11 and asparagine 78. Cysteine 87 (proton donor) is an active-site residue. Residues 88–89 (GN), asparagine 167, asparagine 203, and 221–222 (ER) contribute to the substrate site. Residue cysteine 230 is the Proton acceptor of the active site. 231–232 (GT) is a binding site for substrate.

The protein belongs to the diaminopimelate epimerase family. Homodimer.

Its subcellular location is the cytoplasm. The catalysed reaction is (2S,6S)-2,6-diaminopimelate = meso-2,6-diaminopimelate. The protein operates within amino-acid biosynthesis; L-lysine biosynthesis via DAP pathway; DL-2,6-diaminopimelate from LL-2,6-diaminopimelate: step 1/1. Catalyzes the stereoinversion of LL-2,6-diaminopimelate (L,L-DAP) to meso-diaminopimelate (meso-DAP), a precursor of L-lysine and an essential component of the bacterial peptidoglycan. The chain is Diaminopimelate epimerase from Mycobacterium leprae (strain Br4923).